The primary structure comprises 170 residues: Adenine phosphoribosyltransferase (170 aa).

This sequence belongs to the purine/pyrimidine phosphoribosyltransferase family. As to quaternary structure, homodimer.

The protein resides in the cytoplasm. The catalysed reaction is AMP + diphosphate = 5-phospho-alpha-D-ribose 1-diphosphate + adenine. It participates in purine metabolism; AMP biosynthesis via salvage pathway; AMP from adenine: step 1/1. Functionally, catalyzes a salvage reaction resulting in the formation of AMP, that is energically less costly than de novo synthesis. This chain is Adenine phosphoribosyltransferase, found in Maridesulfovibrio salexigens (strain ATCC 14822 / DSM 2638 / NCIMB 8403 / VKM B-1763) (Desulfovibrio salexigens).